Consider the following 541-residue polypeptide: Protein yellow (541 aa).

Residues 1–21 (MFQDKGWVLLTLITLVSPSWA) form the signal peptide. An N-linked (GlcNAc...) asparagine glycan is attached at Asn144.

This sequence belongs to the major royal jelly protein family.

It localises to the secreted. Its function is as follows. Controls the pigmentation pattern of the adult cuticle and larval mouth parts. The polypeptide is Protein yellow (y) (Drosophila yakuba (Fruit fly)).